Here is a 248-residue protein sequence, read N- to C-terminus: Deoxyribose-phosphate aldolase (248 aa).

The Proton donor/acceptor role is filled by D117. K179 functions as the Schiff-base intermediate with acetaldehyde in the catalytic mechanism. K208 (proton donor/acceptor) is an active-site residue.

This sequence belongs to the DeoC/FbaB aldolase family. DeoC type 1 subfamily.

It is found in the cytoplasm. It catalyses the reaction 2-deoxy-D-ribose 5-phosphate = D-glyceraldehyde 3-phosphate + acetaldehyde. The protein operates within carbohydrate degradation; 2-deoxy-D-ribose 1-phosphate degradation; D-glyceraldehyde 3-phosphate and acetaldehyde from 2-deoxy-alpha-D-ribose 1-phosphate: step 2/2. Its function is as follows. Catalyzes a reversible aldol reaction between acetaldehyde and D-glyceraldehyde 3-phosphate to generate 2-deoxy-D-ribose 5-phosphate. The polypeptide is Deoxyribose-phosphate aldolase (Thermotoga sp. (strain RQ2)).